The chain runs to 369 residues: Choline kinase B2 (369 aa).

This sequence belongs to the choline/ethanolamine kinase family. Mg(2+) serves as cofactor.

The catalysed reaction is choline + ATP = phosphocholine + ADP + H(+). It participates in phospholipid metabolism; phosphatidylcholine biosynthesis; phosphocholine from choline: step 1/1. In terms of biological role, catalyzes the first step in phosphatidylcholine biosynthesis. Phosphorylates choline. The chain is Choline kinase B2 (ckb-2) from Caenorhabditis elegans.